Here is a 519-residue protein sequence, read N- to C-terminus: Keratin, type II cytoskeletal 1b (519 aa).

A head region spans residues 1 to 166 (MSRQFSSQSA…DPEIQKIKTQ (166 aa)). Arg81 and Arg95 each carry omega-N-methylarginine. A coil 1A region spans residues 167–202 (EREQIKTLNNKFASFIDKVRFLEQQNQVLQTKWELL). The IF rod domain occupies 167-480 (EREQIKTLNN…ELLEGEESRM (314 aa)). Residues 203-221 (QQVNTSTRTSSLEPIFEEF) are linker 1. The tract at residues 222–313 (INQLQRQVDV…YLFDTELSQI (92 aa)) is coil 1B. Positions 314-337 (QTHVSDTNVILSMDNNRSLDLDSI) are linker 12. The coil 2 stretch occupies residues 338–476 (INAVRTQYEL…ATYRELLEGE (139 aa)). The segment at 477–519 (ESRMSGALQSQVSIWALPSNEGNDLGERLHDPQSQVPVPKLGC) is tail. The interval 499 to 519 (NDLGERLHDPQSQVPVPKLGC) is disordered.

The protein belongs to the intermediate filament family. In terms of processing, undergoes deimination of some arginine residues (citrullination).

The sequence is that of Keratin, type II cytoskeletal 1b (Krt77) from Rattus norvegicus (Rat).